We begin with the raw amino-acid sequence, 193 residues long: Large ribosomal subunit protein bL9 (193 aa).

The interval 155–193 is disordered; that stretch reads AEGETLTSAEAIYDIQEKPLAENQEEMNDNDANSINEQA. Positions 184–193 are enriched in polar residues; the sequence is NDANSINEQA.

Belongs to the bacterial ribosomal protein bL9 family.

Functionally, binds to the 23S rRNA. This Bartonella quintana (strain Toulouse) (Rochalimaea quintana) protein is Large ribosomal subunit protein bL9.